Consider the following 441-residue polypeptide: Inner kinetochore subunit mis17 (441 aa).

A compositionally biased stretch (polar residues) spans 160-173 (SSILENSPPNKVQR). The interval 160 to 240 (SSILENSPPN…TSSMAPRNLL (81 aa)) is disordered. Over residues 174–183 (LSSLDSSQDS) the composition is skewed to low complexity. A compositionally biased stretch (polar residues) spans 192-201 (VTGTTFSSQA). Low complexity predominate over residues 217–233 (SLTNQSSSLQSSLQTSS).

This sequence belongs to the CENP-U/AME1 family. In terms of assembly, component of the heterotetrameric kinetochore subcomplex COMA, which consists of fta2, fta7, mal2 and mis17. The COMA subcomplex is part of a larger constitutive centromere-associated network (CCAN) (also known as central kinetochore Sim4 complex in fission yeast), which is composed of at least cnl2, cnp3, cnp20, fta1, fta2, fta3, fta4, fta6, fta7, mal2, mhf1, mhf2, mis6, mis15, mis17, sim4 and wip1. Interacts with mis6 and mis15.

It localises to the nucleus. It is found in the chromosome. The protein localises to the centromere. The protein resides in the kinetochore. Functionally, component of the kinetochore, a multiprotein complex that assembles on centromeric DNA and attaches chromosomes to spindle microtubules, mediating chromosome segregation and sister chromatid segregation during meiosis and mitosis. Component of the inner kinetochore COMA complex, which connects centromere-associated proteins and the outer kinetochore. COMA interacts with other inner kinetochore proteins to form the inner kinetochore constitutive centromere-associated network (CCAN), which serves as a structural platform for outer kinetochore assembly. In Schizosaccharomyces pombe (strain 972 / ATCC 24843) (Fission yeast), this protein is Inner kinetochore subunit mis17 (mis17).